Consider the following 90-residue polypeptide: uncharacterized protein (90 aa).

This is an uncharacterized protein from Rickettsia prowazekii (strain Madrid E).